The following is a 288-amino-acid chain: 4-diphosphocytidyl-2-C-methyl-D-erythritol kinase (288 aa).

Lys-10 is an active-site residue. Pro-99–Ser-109 lines the ATP pocket. The active site involves Asp-141.

This sequence belongs to the GHMP kinase family. IspE subfamily. In terms of assembly, homodimer.

It carries out the reaction 4-CDP-2-C-methyl-D-erythritol + ATP = 4-CDP-2-C-methyl-D-erythritol 2-phosphate + ADP + H(+). The protein operates within isoprenoid biosynthesis; isopentenyl diphosphate biosynthesis via DXP pathway; isopentenyl diphosphate from 1-deoxy-D-xylulose 5-phosphate: step 3/6. Catalyzes the phosphorylation of the position 2 hydroxy group of 4-diphosphocytidyl-2C-methyl-D-erythritol. The sequence is that of 4-diphosphocytidyl-2-C-methyl-D-erythritol kinase from Serratia proteamaculans (strain 568).